Consider the following 187-residue polypeptide: MNYKAAIEAILFTMGESVELGRIADAIQLNEKETKKLLDELIKEYRSSSNIGMNIIELDGAYQMCTKPQMYEYLIRIAKQPKKRVLTDVLLETLSIIAYKQPVTKAEIEKIRGVSSEHAVSKLVEYNLVQELGRLDAPGRPLLFGTTEEFLRSFGVSSIDELPVLSPVQVEEFKQEAEEEMHVKLDV.

It belongs to the ScpB family. In terms of assembly, homodimer. Homodimerization may be required to stabilize the binding of ScpA to the Smc head domains. Component of a cohesin-like complex composed of ScpA, ScpB and the Smc homodimer, in which ScpA and ScpB bind to the head domain of Smc. The presence of the three proteins is required for the association of the complex with DNA.

The protein localises to the cytoplasm. In terms of biological role, participates in chromosomal partition during cell division. May act via the formation of a condensin-like complex containing Smc and ScpA that pull DNA away from mid-cell into both cell halves. This chain is Segregation and condensation protein B, found in Agathobacter rectalis (strain ATCC 33656 / DSM 3377 / JCM 17463 / KCTC 5835 / VPI 0990) (Eubacterium rectale).